The primary structure comprises 301 residues: Probable alpha-L-glutamate ligase (301 aa).

The region spanning 104–287 (LQLLSRRGIG…VAGMIIGYLE (184 aa)) is the ATP-grasp domain. ATP is bound by residues Lys-141, 178–179 (EY), Asp-187, and 211–213 (RSN). Residues Asp-248, Glu-260, and Asn-262 each coordinate Mg(2+). Mn(2+) contacts are provided by Asp-248, Glu-260, and Asn-262.

Belongs to the RimK family. Mg(2+) is required as a cofactor. Mn(2+) serves as cofactor.

The polypeptide is Probable alpha-L-glutamate ligase (Pseudomonas syringae pv. syringae (strain B728a)).